Reading from the N-terminus, the 376-residue chain is Ribosomal RNA large subunit methyltransferase G (376 aa).

The protein belongs to the methyltransferase superfamily. RlmG family.

Its subcellular location is the cytoplasm. It catalyses the reaction guanosine(1835) in 23S rRNA + S-adenosyl-L-methionine = N(2)-methylguanosine(1835) in 23S rRNA + S-adenosyl-L-homocysteine + H(+). Its function is as follows. Specifically methylates the guanine in position 1835 (m2G1835) of 23S rRNA. This Vibrio vulnificus (strain CMCP6) protein is Ribosomal RNA large subunit methyltransferase G.